The primary structure comprises 322 residues: MKRLFWNLKHKKAWLVLLLGTGMILSSCSNIDQSFFRELSVESVEKNTAYNQLPVNSTTFRNLVFGTRSYNDGNYVVVIATETDSSQINFLNGSTNQGTSSLSWGGTLGTTIRQVQNRYSTYPNGVKFLIWNDIAPGSVKWNPYARFPVVDRKNELASQEDKDNSNKLRRSDASAVRYREIVDFIQRTYGGNVANLINQSNVHAQTVGNDVTKAIVIAFRKDNLNKIRANFYGLDNSTNPNAPGSGQGDSTPPASSGEGGGSDGSSGGDSSSGNGQNTTPTSPQSSQPAVQRSQKSYGIKQHAVRVSVDFLNFLDSVYTPLN.

The first 27 residues, 1-27, serve as a signal peptide directing secretion; that stretch reads MKRLFWNLKHKKAWLVLLLGTGMILSS. C28 carries N-palmitoyl cysteine lipidation. Residue C28 is the site of S-diacylglycerol cysteine attachment. Residues 235 to 254 are compositionally biased toward polar residues; sequence DNSTNPNAPGSGQGDSTPPA. Positions 235–298 are disordered; sequence DNSTNPNAPG…AVQRSQKSYG (64 aa). Residues 257–267 show a composition bias toward gly residues; the sequence is GEGGGSDGSSG. The span at 274–296 shows a compositional bias: polar residues; it reads NGQNTTPTSPQSSQPAVQRSQKS.

It localises to the cell membrane. This is an uncharacterized protein from Mycoplasma genitalium (strain ATCC 33530 / DSM 19775 / NCTC 10195 / G37) (Mycoplasmoides genitalium).